The primary structure comprises 1022 residues: Collagen alpha-2(VI) chain (1022 aa).

An N-terminal signal peptide occupies residues 1–27 (MSRRTAEMFQQAFLSTLLCVALVPLHA). The nonhelical region stretch occupies residues 28-255 (QFDDEPVTSC…CYKMTCLEIA (228 aa)). In terms of domain architecture, VWFA 1 spans 44–168 (PISVYFVIDT…VITDGHVTGS (125 aa)). 2 N-linked (GlcNAc...) asparagine glycosylation sites follow: N141 and N215. Residues 256-590 (GPAGPKGYRG…PGPPGDPGLT (335 aa)) form a triple-helical region region. The segment at 263–587 (YRGQKGAKGN…EGTPGPPGDP (325 aa)) is disordered. The segment covering 287–299 (DPGIEGPIGYPGP) has biased composition (low complexity). The segment covering 306 to 318 (KGEKGEIGSDGRR) has biased composition (basic and acidic residues). N327 is a glycosylation site (N-linked (GlcNAc...) asparagine). 2 consecutive short sequence motifs (cell attachment site) follow at residues 348 to 350 (RGD) and 366 to 368 (RGD). The span at 363–377 (QGERGDEGMKGDPGR) shows a compositional bias: basic and acidic residues. The segment covering 389–399 (EKGSPGIPGNP) has biased composition (low complexity). Short sequence motifs (cell attachment site) lie at residues 426–428 (RGD), 444–446 (RGD), 465–467 (RGD), 489–491 (RGD), and 498–500 (RGD). Residues 514-519 (GFSYPG) form an interruption in collagenous region region. Residues 534–543 (GPKGGRGELG) show a composition bias toward gly residues. The interval 591 to 1022 (DCDVMTYVRE…FFDRFIRWIC (432 aa)) is nonhelical region. VWFA domains are found at residues 613–738 (ALDI…YDPR) and 833–957 (DIVF…ITGS). Residues N630 and N897 are each glycosylated (N-linked (GlcNAc...) asparagine).

It belongs to the type VI collagen family. Trimers composed of three different chains: alpha 1(VI), alpha 2(VI), and alpha 3(VI). In terms of processing, prolines at the third position of the tripeptide repeating unit (G-X-Y) are hydroxylated in some or all of the chains.

The protein localises to the secreted. The protein resides in the extracellular space. Its subcellular location is the extracellular matrix. In terms of biological role, collagen VI acts as a cell-binding protein. The chain is Collagen alpha-2(VI) chain (COL6A2) from Gallus gallus (Chicken).